A 236-amino-acid chain; its full sequence is Dense granule protein 7 (236 aa).

A signal peptide spans 1 to 26; the sequence is MARHAIFSALCVLGLVAAALPQFATA. Positions 45 to 106 are disordered; the sequence is DGQAPVDSLR…EVHFRKRGVR (62 aa). The segment covering 70 to 80 has biased composition (polar residues); that stretch reads TTSMDKASVES. The required for dimerization, interactions with liposomes and liposome tubulation stretch occupies residues 147-236; the sequence is AVGMGASYFA…SGEDGEDARQ (90 aa). The helical transmembrane segment at 181–201 threads the bilayer; it reads VGTVLGFAALAAAAAFLGMGL. The interval 208–236 is disordered; that stretch reads FSPRKNRSRQPALEQEVPESGEDGEDARQ. An N-linked (GlcNAc...) asparagine glycan is attached at asparagine 213. Residues 223–236 show a composition bias toward acidic residues; it reads EVPESGEDGEDARQ.

Belongs to the Gra7 family. In terms of assembly, homodimer. Can form higher order homooligomers in a lipid-stimulated manner. Component of a complex at least composed of ROP18, GRA7 and ROP2. Interacts with ROP5. Interacts with ROP18 in the absence of ROP5. Interacts with mouse IRGA6/IIGP1 in GTP-dependent manner; the interaction results in faster turnover of the GTP-activated IRGA6/IIGP1 oligomer. Interacts with mouse TRAF6 (via N-terminal RING domain); the interaction plays a role in GRA7-induced pro-inflammatory cytokine production in mouse macrophages.

The protein localises to the secreted. It is found in the parasitophorous vacuole lumen. It localises to the parasitophorous vacuole membrane. The protein resides in the cytoplasm. Its subcellular location is the host cytoplasm. The protein localises to the cytoplasmic vesicle. It is found in the secretory vesicle. Binds lipid bilayers, sequesters host endocytic organelles in the parasitophorous vacuole space, and causes their deformation and remodeling. Plays a role in nutrient acquisition from the host. In complex with ROP18, targets immunity-related GTPases (IRGs) to prevent IRG-mediated parasite killing by mouse cells. Important component within a kinase complex, contributing to phosphorylation of mouse IRGA6/IIGP1, an immunity-related GTPase that protects mice from infection by certain intracellular pathogens, by Toxoplasma gondii ROP5 and ROP18. Induces pro-inflammatory cytokine production in host macrophages. Activates host pro-inflammatory signaling pathways in a MyD88-dependent manner. Triggers generation of reactive oxygen species (ROS) in host cells. Activates MAPK pathway in host cells. Activates host NF-kappa-B signaling pathway by interacting with TRAF6 and modulating the 'Lys-63'-linked polyubiquitination of TRAF6. This is Dense granule protein 7 from Toxoplasma gondii.